A 487-amino-acid polypeptide reads, in one-letter code: Selenium-binding protein 2 (487 aa).

Residue A2 is modified to N-acetylalanine. Selenite is bound by residues C19 and C20.

Belongs to the selenium-binding protein family. As to expression, mostly expressed in seedlings, leaves and stems, and, to a lower extent, in flowers and roots.

Required for the fusion of female gametophyte polar nuclei. The protein is Selenium-binding protein 2 (SBP2) of Arabidopsis thaliana (Mouse-ear cress).